We begin with the raw amino-acid sequence, 274 residues long: Tryptophan synthase alpha chain (274 aa).

Residues Glu-49 and Asp-60 each act as proton acceptor in the active site.

It belongs to the TrpA family. In terms of assembly, tetramer of two alpha and two beta chains.

The enzyme catalyses (1S,2R)-1-C-(indol-3-yl)glycerol 3-phosphate + L-serine = D-glyceraldehyde 3-phosphate + L-tryptophan + H2O. It participates in amino-acid biosynthesis; L-tryptophan biosynthesis; L-tryptophan from chorismate: step 5/5. Functionally, the alpha subunit is responsible for the aldol cleavage of indoleglycerol phosphate to indole and glyceraldehyde 3-phosphate. This Zymomonas mobilis subsp. mobilis (strain ATCC 31821 / ZM4 / CP4) protein is Tryptophan synthase alpha chain.